The sequence spans 23 residues: Acidic phospholipase A2 Ts-A5 (23 aa).

It depends on Ca(2+) as a cofactor. Post-translationally, contains 7 disulfide bonds. Expressed by the venom gland.

It is found in the secreted. It carries out the reaction a 1,2-diacyl-sn-glycero-3-phosphocholine + H2O = a 1-acyl-sn-glycero-3-phosphocholine + a fatty acid + H(+). In terms of biological role, snake venom phospholipase A2 (PLA2) that shows a moderate inhibition of ADP-induced human platelet aggregation when tested on platelet rich plasma. Exhibits high hydrolytic activities and prefers the anionic micelles (dPPC with deoxycholate) to the zwitterionic micelles (dPPC with Triton X-100). PLA2 catalyzes the calcium-dependent hydrolysis of the 2-acyl groups in 3-sn-phosphoglycerides. The polypeptide is Acidic phospholipase A2 Ts-A5 (Trimeresurus stejnegeri (Chinese green tree viper)).